The following is a 530-amino-acid chain: MTRDFKPGDLIFAKMKGYPHWPARVDEVPDGAVKPPTNKLPIFFFGTHETAFLGPKDIFPYSENKEKYGKPNKRKGFNEGLWEIDNNPKVKFSSQQAATKQSNASSDVEVEEKETSVSKEDTDHEEKASNEDVTKAVDITTPKAARRGRKRKAEKQVETEEAGVVTTATASVNLKVSPKRGRPAATEVKIPKPRGRPKMVKQPCPSESDIITEEDKSKKKGQEEKQPKKQPKKDEEGQKEEDKPRKEPDKKEGKKEVESKRKNLAKTGVTSTSDSEEEGDDQEGEKKRKGGRNFQTAHRRNMLKGQHEKEAADRKRKQEEQMETEQQNKDEGKKPEVKKVEKKRETSMDSRLQRIHAEIKNSLKIDNLDVNRCIEALDELASLQVTMQQAQKHTEMITTLKKIRRFKVSQVIMEKSTMLYNKFKNMFLVGEGDSVITQVLNKSLAEQRQHEEANKTKDQGKKGPNKKLEKEQTGSKTLNGGSDAQDGNQPQHNGESNEDSKDNHEASTKKKPSSEERETEISLKDSTLDN.

Positions 1–64 constitute a PWWP domain; it reads MTRDFKPGDL…PKDIFPYSEN (64 aa). Lysine 75 participates in a covalent cross-link: Glycyl lysine isopeptide (Lys-Gly) (interchain with G-Cter in SUMO2). The segment at 88 to 349 is disordered; the sequence is PKVKFSSQQA…VEKKRETSMD (262 aa). The segment covering 92–104 has biased composition (polar residues); it reads FSSQQAATKQSNA. 3 positions are modified to phosphoserine: serine 102, serine 105, and serine 106. Residues 113-135 are compositionally biased toward basic and acidic residues; the sequence is KETSVSKEDTDHEEKASNEDVTK. Threonine 115 and threonine 122 each carry phosphothreonine. Residue serine 129 is modified to Phosphoserine. At threonine 141 the chain carries Phosphothreonine. Over residues 144-153 the composition is skewed to basic residues; that stretch reads AARRGRKRKA. The Nuclear localization signal signature appears at 146 to 156; the sequence is RRGRKRKAEKQ. Threonine 167 bears the Phosphothreonine mark. Residues serine 177 and serine 206 each carry the phosphoserine modification. The span at 213–261 shows a compositional bias: basic and acidic residues; sequence EEDKSKKKGQEEKQPKKQPKKDEEGQKEEDKPRKEPDKKEGKKEVESKR. Serine 271 is modified (phosphoserine). Threonine 272 carries the phosphothreonine modification. Residues serine 273 and serine 275 each carry the phosphoserine modification. Residues 274 to 283 are compositionally biased toward acidic residues; that stretch reads DSEEEGDDQE. Residues 287–302 are compositionally biased toward basic residues; the sequence is KRKGGRNFQTAHRRNM. Over residues 305–349 the composition is skewed to basic and acidic residues; it reads GQHEKEAADRKRKQEEQMETEQQNKDEGKKPEVKKVEKKRETSMD. Coiled-coil stretches lie at residues 306–334 and 371–395; these read QHEKEAADRKRKQEEQMETEQQNKDEGKK and NRCIEALDELASLQVTMQQAQKHTE. The interval 340–417 is integrase-binding domain (IBD); that stretch reads VEKKRETSMD…VSQVIMEKST (78 aa). At serine 434 the chain carries Phosphoserine. A Phosphothreonine modification is found at threonine 437. Phosphoserine is present on serine 443. Residues 446–473 show a composition bias toward basic and acidic residues; that stretch reads EQRQHEEANKTKDQGKKGPNKKLEKEQT. The interval 446–530 is disordered; the sequence is EQRQHEEANK…ISLKDSTLDN (85 aa). Polar residues predominate over residues 474–494; sequence GSKTLNGGSDAQDGNQPQHNG. The span at 498–530 shows a compositional bias: basic and acidic residues; the sequence is EDSKDNHEASTKKKPSSEERETEISLKDSTLDN. Serine 514 bears the Phosphoserine mark. The residue at position 517 (arginine 517) is a Citrulline. The residue at position 522 (serine 522) is a Phosphoserine. A Phosphothreonine modification is found at threonine 527.

It belongs to the HDGF family. In terms of assembly, monomer. Interacts with IFRD1/PC4. Isoform 2 interacts with SFRS1. Isoform 1 interacts (via IBD domain) with POGZ (via IBM motif) and CDCA7L (via IBM motifs). Interacts (via IBD domain) with KMT2A (via IBM motifs) with a moderate affinity whereas interacts with the KMT2A-MEN1 complex with a greater affinity; MEN1 enhances interaction of KMT2A with PSIP1. Interacts with fusion protein KMT2A-MLLT3. Interacts (via IBD domain) with IWS1 (via IBM motif), MED1 (via IBM motif) and DBF4 (via IBM motifs). As to quaternary structure, (Microbial infection) Interacts (via IBD domain) with human HIV-1 integrase protein (HIV-1 IN), determining its nuclear localization, its tight association with chromatin and its protection from the proteasome. (Microbial infection) Interacts with HIV-2 IN. Citrullinated by PADI4. In terms of tissue distribution, widely expressed. Expressed at high level in the thymus. Expressed in fetal and adult brain. Expressed in neurons, but not astrocytes. Markedly elevated in fetal as compared to adult brain. In the adult brain, expressed in the subventricular zone (SVZ), in hippocampus, and undetectable elsewhere. In the fetal brain, expressed in the germinal neuroepithelium and cortical plate regions.

The protein resides in the nucleus. Its function is as follows. Transcriptional coactivator involved in neuroepithelial stem cell differentiation and neurogenesis. Involved in particular in lens epithelial cell gene regulation and stress responses. May play an important role in lens epithelial to fiber cell terminal differentiation. May play a protective role during stress-induced apoptosis. Isoform 2 is a more general and stronger transcriptional coactivator. Isoform 2 may also act as an adapter to coordinate pre-mRNA splicing. Cellular cofactor for lentiviral integration. The sequence is that of PC4 and SFRS1-interacting protein (PSIP1) from Homo sapiens (Human).